We begin with the raw amino-acid sequence, 213 residues long: Imidazole glycerol phosphate synthase subunit HisH (213 aa).

The Glutamine amidotransferase type-1 domain maps to 6 to 213 (LVTVIDYGMG…FKNFLNWNGQ (208 aa)). Cys-86 serves as the catalytic Nucleophile. Active-site residues include His-192 and Glu-194.

Heterodimer of HisH and HisF.

The protein localises to the cytoplasm. The enzyme catalyses 5-[(5-phospho-1-deoxy-D-ribulos-1-ylimino)methylamino]-1-(5-phospho-beta-D-ribosyl)imidazole-4-carboxamide + L-glutamine = D-erythro-1-(imidazol-4-yl)glycerol 3-phosphate + 5-amino-1-(5-phospho-beta-D-ribosyl)imidazole-4-carboxamide + L-glutamate + H(+). The catalysed reaction is L-glutamine + H2O = L-glutamate + NH4(+). It participates in amino-acid biosynthesis; L-histidine biosynthesis; L-histidine from 5-phospho-alpha-D-ribose 1-diphosphate: step 5/9. Its function is as follows. IGPS catalyzes the conversion of PRFAR and glutamine to IGP, AICAR and glutamate. The HisH subunit catalyzes the hydrolysis of glutamine to glutamate and ammonia as part of the synthesis of IGP and AICAR. The resulting ammonia molecule is channeled to the active site of HisF. In Hydrogenovibrio crunogenus (strain DSM 25203 / XCL-2) (Thiomicrospira crunogena), this protein is Imidazole glycerol phosphate synthase subunit HisH.